We begin with the raw amino-acid sequence, 467 residues long: Ergochrome gene cluster transcriptional coactivator CPUR_05432 (467 aa).

The 71-residue stretch at 109–179 (IAIQCEMLGS…RRGYVAHTPL (71 aa)) folds into the HTH iclR-type domain. The segment at residues 139–158 (IQDVANLSNVPEQQLAQMIG) is a DNA-binding region (H-T-H motif).

The protein resides in the nucleus. Transcriptional coactivator; part of the gene cluster responsible for the typical purple-black color of the ergot sclerotia. The ergochrome gene cluster produces several ergot pigments including the yellow ergochrome secalonic acid and its derivatives, as well as the red anthraquinones endocrocin and clavorubin. With CPUR_05433, coregulates the production of geodin. This chain is Ergochrome gene cluster transcriptional coactivator CPUR_05432, found in Claviceps purpurea (strain 20.1) (Ergot fungus).